Reading from the N-terminus, the 141-residue chain is HTH-type transcriptional repressor NsrR (141 aa).

The 128-residue stretch at 2-129 folds into the HTH rrf2-type domain; it reads QLTNFTDFGL…DKHTIQDMLT (128 aa). Positions 28 to 51 form a DNA-binding region, H-T-H motif; the sequence is ITVVTETFDVSRNHMVKIINKLGQ. [2Fe-2S] cluster is bound by residues Cys91, Cys96, and Cys102.

Requires [2Fe-2S] cluster as cofactor.

Its function is as follows. Nitric oxide-sensitive repressor of genes involved in protecting the cell against nitrosative stress. May require iron for activity. The protein is HTH-type transcriptional repressor NsrR of Aliivibrio fischeri (strain ATCC 700601 / ES114) (Vibrio fischeri).